The primary structure comprises 310 residues: Thiamine-monophosphate kinase (310 aa).

Residues D24, T38, and D39 each contribute to the Mg(2+) site. D46 is a substrate binding site. Mg(2+)-binding residues include D67 and D115. Residues 114–115 (GD) and R138 each bind ATP. D203 lines the Mg(2+) pocket. Residue S205 participates in ATP binding. A Mg(2+)-binding site is contributed by D206. Substrate-binding residues include E251 and W306.

The protein belongs to the thiamine-monophosphate kinase family.

The catalysed reaction is thiamine phosphate + ATP = thiamine diphosphate + ADP. The protein operates within cofactor biosynthesis; thiamine diphosphate biosynthesis; thiamine diphosphate from thiamine phosphate: step 1/1. Catalyzes the ATP-dependent phosphorylation of thiamine-monophosphate (TMP) to form thiamine-pyrophosphate (TPP), the active form of vitamin B1. The chain is Thiamine-monophosphate kinase from Nitrosopumilus maritimus (strain SCM1).